The primary structure comprises 810 residues: Leucine--tRNA ligase (810 aa).

Residues 41-52 (PYPSGQGLHVGH) carry the 'HIGH' region motif. The 'KMSKS' region motif lies at 582–586 (KMSKS). Position 585 (Lys585) interacts with ATP.

This sequence belongs to the class-I aminoacyl-tRNA synthetase family.

The protein localises to the cytoplasm. It carries out the reaction tRNA(Leu) + L-leucine + ATP = L-leucyl-tRNA(Leu) + AMP + diphosphate. The chain is Leucine--tRNA ligase from Oenococcus oeni (strain ATCC BAA-331 / PSU-1).